Here is a 155-residue protein sequence, read N- to C-terminus: Large ribosomal subunit protein uL22 (155 aa).

Positions 109 to 155 are disordered; that stretch reads HITVIVESRPPKKAGKQGASASAARARRAQASKAATKKATDSKEGSE. Basic and acidic residues predominate over residues 146-155; that stretch reads KATDSKEGSE.

This sequence belongs to the universal ribosomal protein uL22 family. Part of the 50S ribosomal subunit.

In terms of biological role, this protein binds specifically to 23S rRNA; its binding is stimulated by other ribosomal proteins, e.g. L4, L17, and L20. It is important during the early stages of 50S assembly. It makes multiple contacts with different domains of the 23S rRNA in the assembled 50S subunit and ribosome. Its function is as follows. The globular domain of the protein is located near the polypeptide exit tunnel on the outside of the subunit, while an extended beta-hairpin is found that lines the wall of the exit tunnel in the center of the 70S ribosome. This is Large ribosomal subunit protein uL22 from Mycolicibacterium vanbaalenii (strain DSM 7251 / JCM 13017 / BCRC 16820 / KCTC 9966 / NRRL B-24157 / PYR-1) (Mycobacterium vanbaalenii).